Consider the following 281-residue polypeptide: sn-glycerol-3-phosphate transport system permease protein UgpE (281 aa).

A run of 6 helical transmembrane segments spans residues leucine 16–leucine 36, phenylalanine 85–phenylalanine 105, phenylalanine 113–valine 133, leucine 142–phenylalanine 162, alanine 202–isoleucine 222, and tryptophan 247–valine 267. In terms of domain architecture, ABC transmembrane type-1 spans leucine 77–methionine 268.

It belongs to the binding-protein-dependent transport system permease family. UgpAE subfamily. The complex is composed of two ATP-binding proteins (UgpC), two transmembrane proteins (UgpA and UgpE) and a solute-binding protein (UgpB).

The protein resides in the cell inner membrane. Part of the ABC transporter complex UgpBAEC involved in sn-glycerol-3-phosphate (G3P) import. Probably responsible for the translocation of the substrate across the membrane. The protein is sn-glycerol-3-phosphate transport system permease protein UgpE (ugpE) of Shigella dysenteriae serotype 1 (strain Sd197).